Here is a 118-residue protein sequence, read N- to C-terminus: Small ribosomal subunit protein uS13 (118 aa).

The tract at residues 94-118 (SLPLRGQRTKTNARTRKGPRKPIRK) is disordered.

The protein belongs to the universal ribosomal protein uS13 family. Part of the 30S ribosomal subunit. Forms a loose heterodimer with protein S19. Forms two bridges to the 50S subunit in the 70S ribosome.

In terms of biological role, located at the top of the head of the 30S subunit, it contacts several helices of the 16S rRNA. In the 70S ribosome it contacts the 23S rRNA (bridge B1a) and protein L5 of the 50S subunit (bridge B1b), connecting the 2 subunits; these bridges are implicated in subunit movement. Contacts the tRNAs in the A and P-sites. This chain is Small ribosomal subunit protein uS13, found in Shewanella frigidimarina (strain NCIMB 400).